Consider the following 1793-residue polypeptide: Chitin synthase 5 (1793 aa).

Residues 1 to 28 (MTNPRMSMYSLASEAPGGNRGTGQQSTQ) are disordered. 5 N-linked (GlcNAc...) asparagine glycosylation sites follow: N70, N164, N638, N664, and N669. 2 consecutive transmembrane segments (helical) span residues 750 to 770 (VWVFIVWAFTWWIPSPLLRYV) and 786 to 806 (LVLCFFIFLMNALIVFWIVAF). The region spanning 815 to 877 (DKAYSQKEVD…GMNLDDYFVA (63 aa)) is the Cytochrome b5 heme-binding domain. Residues N897, N1019, and N1023 are each glycosylated (N-linked (GlcNAc...) asparagine). A helical membrane pass occupies residues 1056 to 1076 (LLLAFSIMLCAVILLKFVSAL). N-linked (GlcNAc...) asparagine glycosylation is present at N1421. 3 helical membrane passes run 1452–1472 (LFGTIILPATCVYLGYLIYLV), 1479–1499 (FPLISIIMLAAVYGLQALIFI), and 1507–1527 (IGWMIIYILAFPIYSFVLPIY). N-linked (GlcNAc...) asparagine glycosylation is found at N1534 and N1705. A DEK-C domain is found at 1735 to 1791 (GPDDGMIVEAIRTVLMEVDLDTVTKKQVRALVEQRLQSELVGERRTFMDRQIDHELA).

It belongs to the chitin synthase family. Class V subfamily.

It is found in the cell membrane. It catalyses the reaction [(1-&gt;4)-N-acetyl-beta-D-glucosaminyl](n) + UDP-N-acetyl-alpha-D-glucosamine = [(1-&gt;4)-N-acetyl-beta-D-glucosaminyl](n+1) + UDP + H(+). Its function is as follows. Polymerizes chitin, a structural polymer of the cell wall and septum, by transferring the sugar moiety of UDP-GlcNAc to the non-reducing end of the growing chitin polymer. Regulates Germination and Tolerance to Hyperosmotic Stress. Plays a key role in pathogenicity. Likely contributes to post-penetration virulence. This is Chitin synthase 5 from Verticillium dahliae (strain VdLs.17 / ATCC MYA-4575 / FGSC 10137) (Verticillium wilt).